Reading from the N-terminus, the 162-residue chain is Calcium vector protein (162 aa).

Ala-2 carries the post-translational modification N-acetylalanine. 4 EF-hand domains span residues 12 to 47 (EEKD…LGQT), 49 to 84 (TKRE…KWVR), 86 to 121 (DDEE…VGEE), and 123 to 158 (LTDA…SKNA). Lys-96 bears the N6,N6,N6-trimethyllysine mark. Ca(2+) contacts are provided by Asp-99, Asn-101, Asp-103, and Glu-110. Lys-117 is subject to N6,N6,N6-trimethyllysine. Residues Asp-136, Asp-138, Asn-140, and Glu-147 each contribute to the Ca(2+) site.

The protein resides in the cytoplasm. The exact function of this protein is not yet known. It interacts with CAVPT, a protein also of unknown function, in a calcium-dependent way. This protein binds two calcium ions. The protein is Calcium vector protein of Branchiostoma lanceolatum (Common lancelet).